We begin with the raw amino-acid sequence, 346 residues long: L-threonine dehydratase catabolic TdcB (346 aa).

Phe59 to Thr60 contacts AMP. Lys64 is modified (N6-(pyridoxal phosphate)lysine). Residues Gln94, Gly125–Tyr126, and Asn321 each bind AMP.

This sequence belongs to the serine/threonine dehydratase family. In terms of assembly, in the native structure, TdcB is in a dimeric form, whereas in the TdcB-AMP complex, it exists in a tetrameric form (dimer of dimers). Pyridoxal 5'-phosphate serves as cofactor.

The enzyme catalyses L-threonine = 2-oxobutanoate + NH4(+). Its pathway is amino-acid degradation; L-threonine degradation via propanoate pathway; propanoate from L-threonine: step 1/4. With respect to regulation, each protein molecule can bind up to four molecules of AMP, which act as an allosteric activator to the enzyme. In terms of biological role, catalyzes the anaerobic formation of alpha-ketobutyrate and ammonia from threonine in a two-step reaction. The first step involved a dehydration of threonine and a production of enamine intermediates (aminocrotonate), which tautomerizes to its imine form (iminobutyrate). Both intermediates are unstable and short-lived. The second step is the nonenzymatic hydrolysis of the enamine/imine intermediates to form 2-ketobutyrate and free ammonia. In the low water environment of the cell, the second step is accelerated by RidA. The chain is L-threonine dehydratase catabolic TdcB (tdcB) from Staphylococcus aureus (strain USA300).